Reading from the N-terminus, the 197-residue chain is RNA-binding protein with multiple splicing (197 aa).

Residue M1 is modified to N-acetylmethionine. T12 is modified (phosphothreonine). The RRM domain occupies 24–101 (RTLFVSGLPL…QTLRLEFAKA (78 aa)). The interval 98–105 (FAKANTKM) is interaction with RNA. Residue T113 is modified to Phosphothreonine.

In terms of assembly, homodimer; each protein chain binds one RNA molecule via the external surface of the homodimer. Interacts with RNA binding proteins MBNL1, RBFOX2, RBM4 and RBM14; the interaction allows cooperative assembly of stable cell-specific alternative splicing regulatory complexes. Also interacts with RBM47, MATR3 and ESRP2. Interacts with SMAD2, SMAD3 and SMAD4; the interactions are direct. As to expression, mRNA expressed in developing heart, with significantly higher expression in the atria relative to the ventricles.

The protein localises to the nucleus. The protein resides in the cytoplasm. Its subcellular location is the stress granule. It is found in the P-body. Its function is as follows. RNA binding protein that mediates the regulation of pre-mRNA alternative splicing (AS). Acts either as activator (FLNB, HSPG2, LIPA1, MYOCD, PTPRF and PPFIBP1) or repressor (TPM1, ACTN1, ITGA7, PIEZO1, LSM14B, MBNL1 and MBML2) of splicing events on specific pre-mRNA targets. Together with RNA binding proteins RBFOX2 and MBNL1/2, activates a splicing program associated with differentiated contractile vascular smooth muscle cells (SMC) by regulating AS of numerous pre-mRNA involved in actin cytoskeleton and focal adhesion machineries, suggesting a role in promoting a cell differentiated state. Binds to introns, exons and 3'-UTR associated with tandem CAC trinucleotide motifs separated by a variable spacer region, at a minimum as a dimer. The minimal length of RNA required for RBPMS-binding tandem CAC motifs is 15 nt, with spacing ranging from 1 to 9 nt. Can also bind to CA dinucleotide repeats. Mediates repression of TPM1 exon 3 by binding to CAC tandem repeats in the flanking intronic regions, followed by higher-order oligomerization and heterotypic interactions with other splicing regulators including MBNL1 and RBFOX2, which prevents assembly of ATP-dependent splicing complexes. This is RNA-binding protein with multiple splicing from Mus musculus (Mouse).